The sequence spans 285 residues: Octanoyltransferase (285 aa).

One can recognise a BPL/LPL catalytic domain in the interval 50-277 (LRTPDELWIV…NIAQRHAGDI (228 aa)). Substrate contacts are provided by residues 89–96 (RGGQVTWH), 189–191 (SLG), and 202–204 (GIA). The Acyl-thioester intermediate role is filled by C220.

Belongs to the LipB family.

The protein resides in the cytoplasm. It carries out the reaction octanoyl-[ACP] + L-lysyl-[protein] = N(6)-octanoyl-L-lysyl-[protein] + holo-[ACP] + H(+). It functions in the pathway protein modification; protein lipoylation via endogenous pathway; protein N(6)-(lipoyl)lysine from octanoyl-[acyl-carrier-protein]: step 1/2. Catalyzes the transfer of endogenously produced octanoic acid from octanoyl-acyl-carrier-protein onto the lipoyl domains of lipoate-dependent enzymes. Lipoyl-ACP can also act as a substrate although octanoyl-ACP is likely to be the physiological substrate. The polypeptide is Octanoyltransferase (Psychrobacter cryohalolentis (strain ATCC BAA-1226 / DSM 17306 / VKM B-2378 / K5)).